Here is a 1765-residue protein sequence, read N- to C-terminus: Sodium channel protein type 11 subunit alpha (1765 aa).

Over 1 to 126 (MEERYYPVIF…PIRSFMIRIS (126 aa)) the chain is Cytoplasmic. The stretch at 115 to 406 (FNPIRSFMIR…VTMAYEEQNR (292 aa)) is one I repeat. A helical membrane pass occupies residues 127–148 (VHSVFSMFIICTVIINCMFMAN). The N-linked (GlcNAc...) asparagine glycan is linked to asparagine 149. The Extracellular portion of the chain corresponds to 149 to 159 (NSSVDSRPSSN). The chain crosses the membrane as a helical span at residues 160 to 179 (IPEYVFIGIYVLEAVIKILA). Over 180-191 (RGFIVDEFSYLR) the chain is Cytoplasmic. The helical transmembrane segment at 192–211 (DPWNWLDFIVIGTAIAPCFL) threads the bilayer. Residues 212-219 (GNKVNNLS) lie on the Extracellular side of the membrane. N-linked (GlcNAc...) asparagine glycosylation is present at asparagine 217. The helical; Voltage-sensor transmembrane segment at 220–239 (TLRTFRVLRALKAISVISGL) threads the bilayer. At 240–255 (KVIVGALLRSVKKLVD) the chain is on the cytoplasmic side. A helical membrane pass occupies residues 256–269 (VMVLTLFCLSIFAL). The Extracellular segment spans residues 270–342 (VGQQLFMGIL…PDYNYTNFDS (73 aa)). A disulfide bond links cysteine 283 and cysteine 320. Residues asparagine 303, asparagine 327, and asparagine 336 are each glycosylated (N-linked (GlcNAc...) asparagine). The pore-forming intramembrane region spans 343–367 (FGWSFLAMFRVMTQDSWEKLYRQIL). Over 368–374 (RTSGIYF) the chain is Extracellular. The helical transmembrane segment at 375–400 (VFFFVVVIFLGSFYLLNLTLAVVTMA) threads the bilayer. At 401-570 (YEEQNRNVAA…WLCIKKVLQT (170 aa)) the chain is on the cytoplasmic side. A disordered region spans residues 470-490 (RGSKTARASASDSEDDASKNP). An II repeat occupies 557–821 (CSPPWLCIKK…EGETRKTKVQ (265 aa)). A helical transmembrane segment spans residues 571–594 (IMTDPFTELAITICIIVNTVFLAM). The Extracellular portion of the chain corresponds to 595-605 (EHHNMDNSLKD). The chain crosses the membrane as a helical span at residues 606-629 (ILKIGNWVFTGIFIAEMCLKIIAL). Residues 630 to 637 (DPYHYFRH) lie on the Cytoplasmic side of the membrane. The helical transmembrane segment at 638-659 (GWNIFDSIVALVSLADVLFHKL) threads the bilayer. Residues 660 to 664 (SKNLS) lie on the Extracellular side of the membrane. Asparagine 662 is a glycosylation site (N-linked (GlcNAc...) asparagine). Residues 665–684 (FLASLRVLRVFKLAKSWPTL) form a helical; Voltage-sensor membrane-spanning segment. The Cytoplasmic segment spans residues 685 to 699 (NTLIKIIGHSVGALG). A helical transmembrane segment spans residues 700 to 722 (NLTVVLTIVVFIFSVVGMRLFGA). Topologically, residues 723–742 (KFNKTCSTSPESLRRWHMGD) are extracellular. Asparagine 725 is a glycosylation site (N-linked (GlcNAc...) asparagine). The pore-forming intramembrane region spans 743–763 (FYHSFLVVFRILCGEWIENMW). Residues 764 to 773 (ECMQEMEGSP) are Extracellular-facing. Cysteines 765 and 775 form a disulfide. Residues 774–799 (LCVIVFVLIMVVGKLVVLNLFIALLL) traverse the membrane as a helical segment. At 800–1030 (NSFSNEEKDG…WWNLRKTCYQ (231 aa)) the chain is on the cytoplasmic side. The interval 850–869 (NSPKPNEATESFAGESRDTA) is disordered. An III repeat occupies 1023 to 1320 (NLRKTCYQIV…KKYYNAMKKL (298 aa)). The helical transmembrane segment at 1031-1053 (IVKHSWFESFIIFVILLSSGALI) threads the bilayer. The Extracellular segment spans residues 1054-1067 (FEDVNLPSRPQVEK). The chain crosses the membrane as a helical span at residues 1068–1093 (LLKCTDNIFTFIFLLEMILKWVAFGF). At 1094–1099 (RKYFTS) the chain is on the cytoplasmic side. Residues 1100–1117 (AWCWLDFLIVVVSGLSLT) traverse the membrane as a helical segment. Asparagine 1118 is a topological domain (extracellular). A helical; Voltage-sensor membrane pass occupies residues 1119 to 1140 (LPNLKSFRNLRALRPLRALSQF). Over 1141–1159 (EGMKVVVNALMSAIPAILN) the chain is Cytoplasmic. Residues 1160 to 1181 (VLLVCLIFWLIFCILGVNFFSG) traverse the membrane as a helical segment. Residues 1182–1224 (KFGRCINGTDINKYFNASNVPNQSQCLVSNYTWKVPNVNFDNV) lie on the Extracellular side of the membrane. Residues asparagine 1188, asparagine 1197, asparagine 1203, and asparagine 1211 are each glycosylated (N-linked (GlcNAc...) asparagine). The segment at residues 1225-1246 (GNAYLALLQVATYKGWLDIMNA) is an intramembrane region (pore-forming). At 1247–1262 (AVDSRGKDEQPAFEAN) the chain is on the extracellular side. A helical transmembrane segment spans residues 1263–1289 (LYAYLYFVVFIIFGSFFTLNLFIGVII). Over 1290–1342 (DNFNQQQKKLGGQDIFMTEEQKKYYNAMKKLGTKKPQKPIPRPLNKCQAFVFD) the chain is Cytoplasmic. Residues 1329-1619 (IPRPLNKCQA…WEKFDPEATQ (291 aa)) form an IV repeat. The chain crosses the membrane as a helical span at residues 1343-1366 (LVTSQVFDVIILGLIVTNMIIMMA). The Extracellular segment spans residues 1367–1377 (ESEGQPNEVKK). Residues 1378–1401 (IFDILNIVFVVIFTVECLIKVFAL) traverse the membrane as a helical segment. Residues 1402-1407 (RQHYFT) lie on the Cytoplasmic side of the membrane. A helical transmembrane segment spans residues 1408 to 1431 (NGWNLFDCVVVVLSIISTLVSGLE). Over 1432–1440 (NSNVFPPTL) the chain is Extracellular. A helical; Voltage-sensor membrane pass occupies residues 1441 to 1463 (FRIVRLARIGRILRLVRAARGIR). Topologically, residues 1464 to 1478 (TLLFALMMSLPSLFN) are cytoplasmic. Residues 1479–1501 (IGLLLFLVMFIYAIFGMNWFSKV) form a helical membrane-spanning segment. Residues 1502–1515 (KRGSGIDDIFNFDT) lie on the Extracellular side of the membrane. Residues 1516–1538 (FSGSMLCLFQITTSAGWDALLNP) constitute an intramembrane region (pore-forming). At 1539–1559 (MLESKASCNSSSQESCQQPQI) the chain is on the extracellular side. A helical membrane pass occupies residues 1560-1584 (AIVYFVSYIIISFLIVVNMYIAVIL). The Cytoplasmic portion of the chain corresponds to 1585-1765 (ENFNTATEES…DVPKIKVHCD (181 aa)).

This sequence belongs to the sodium channel (TC 1.A.1.10) family. Nav1.9/SCN11A subfamily. In terms of assembly, the voltage-resistant sodium channel consists of an ion conducting pore forming alpha-subunit regulated by one or more auxiliary subunits SCN1B, SCN2B and SCN3B. Expressed in the dorsal root ganglia (C-fiber neurons), spinal cord, trigeminal ganglia, testis, ovary, uterus and small intestine.

The protein localises to the cell membrane. The enzyme catalyses Na(+)(in) = Na(+)(out). Functionally, sodium channel mediating the voltage-dependent sodium ion permeability of excitable membranes. Assuming opened or closed conformations in response to the voltage difference across the membrane, the protein forms a sodium-selective channel through which sodium ions may pass in accordance with their electrochemical gradient. Involved in membrane depolarization during action potential in nociceptors which function as key relay stations for the electrical transmission of pain signals from the periphery to the central nervous system. Also involved in rapid BDNF-evoked neuronal depolarization. The chain is Sodium channel protein type 11 subunit alpha from Mus musculus (Mouse).